We begin with the raw amino-acid sequence, 130 residues long: Ribosome-binding factor A (130 aa).

Residues 111-130 form a disordered region; it reads RDLDDVGPEATSSDEDAEQR.

This sequence belongs to the RbfA family. As to quaternary structure, monomer. Binds 30S ribosomal subunits, but not 50S ribosomal subunits or 70S ribosomes.

The protein localises to the cytoplasm. Its function is as follows. One of several proteins that assist in the late maturation steps of the functional core of the 30S ribosomal subunit. Associates with free 30S ribosomal subunits (but not with 30S subunits that are part of 70S ribosomes or polysomes). Required for efficient processing of 16S rRNA. May interact with the 5'-terminal helix region of 16S rRNA. The polypeptide is Ribosome-binding factor A (Xanthomonas axonopodis pv. citri (strain 306)).